Consider the following 77-residue polypeptide: U11-lycotoxin-Ls1a (77 aa).

The first 20 residues, 1 to 20 (MKLIILTGLVLFAIVSLIEA), serve as a signal peptide directing secretion. Positions 21–26 (EEESGR) are excised as a propeptide.

This sequence belongs to the neurotoxin 19 (CSTX) family. 10 (U11-Lctx) subfamily. Contains 4 disulfide bonds. As to expression, expressed by the venom gland.

Its subcellular location is the secreted. In Lycosa singoriensis (Wolf spider), this protein is U11-lycotoxin-Ls1a.